We begin with the raw amino-acid sequence, 174 residues long: Endoribonuclease YbeY (174 aa).

Positions 129, 133, and 139 each coordinate Zn(2+).

Belongs to the endoribonuclease YbeY family. Zn(2+) serves as cofactor.

It is found in the cytoplasm. Its function is as follows. Single strand-specific metallo-endoribonuclease involved in late-stage 70S ribosome quality control and in maturation of the 3' terminus of the 16S rRNA. The chain is Endoribonuclease YbeY from Lactobacillus acidophilus (strain ATCC 700396 / NCK56 / N2 / NCFM).